A 156-amino-acid chain; its full sequence is Calglandulin (156 aa).

4 consecutive EF-hand domains span residues 8 to 43 (EQIT…VGIN), 44 to 79 (PTKR…YHEK), 82 to 117 (NQDE…AGEP), and 118 to 153 (LNEQ…ESFK). Residues Asp-131, Asp-133, Asp-135, Thr-137, and Glu-142 each coordinate Ca(2+).

It belongs to the calmodulin family. Calglandulin subfamily. Expressed by the venom gland.

It localises to the cytoplasm. Functionally, may be involved in the cellular control mechanism of the secretion of toxins from the gland into the venom. This Bothrops insularis (Golden lancehead) protein is Calglandulin.